The chain runs to 442 residues: Endothelin receptor type B (442 aa).

Positions 1–26 are cleaved as a signal peptide; the sequence is MQPPPSLCGRALVALVLACGLSRIWG. Residues 27–101 lie on the Extracellular side of the membrane; that stretch reads EERGFPPDRA…GPIEIKETFK (75 aa). Residue Asn59 is glycosylated (N-linked (GlcNAc...) asparagine). A disordered region spans residues 69 to 88; sequence AEVPKGDRTAGSPPRTISPP. A helical transmembrane segment spans residues 102–126; sequence YINTVVSCLVFVLGIIGNSTLLRII. Over 127–137 the chain is Cytoplasmic; sequence YKNKCMRNGPN. A helical membrane pass occupies residues 138-163; the sequence is ILIASLALGDLLHIVIDIPINVYKLL. Over 164–175 the chain is Extracellular; that stretch reads AEDWPFGAEMCK. Cys174 and Cys255 are joined by a disulfide. Residues 176–197 form a helical membrane-spanning segment; it reads LVPFIQKASVGITVLSLCALSI. At 198–218 the chain is on the cytoplasmic side; sequence DRYRAVASWSRIKGIGVPKWT. Residues 219-243 form a helical membrane-spanning segment; that stretch reads AVEIVLIWVVSVVLAVPEAIGFDII. The Extracellular segment spans residues 244 to 271; it reads TMDYKGSYLRICLLHPVQKTAFMQFYKT. A helical transmembrane segment spans residues 272–296; it reads AKDWWLFSFYFCLPLAITAFFYTLM. Topologically, residues 297 to 324 are cytoplasmic; sequence TCEMLRKKSGMQIALNDHLKQRREVAKT. The residue at position 305 (Ser305) is a Phosphoserine. Residues 325-350 traverse the membrane as a helical segment; that stretch reads VFCLVLVFALCWLPLHLSRILKLTLY. The Extracellular segment spans residues 351 to 362; the sequence is NQNDPNRCELLS. The chain crosses the membrane as a helical span at residues 363-389; that stretch reads FLLVLDYIGINMASLNSCINPIALYLV. The Cytoplasmic segment spans residues 390 to 442; it reads SKRFKNCFKSCLCCWCQSFEEKQSLEEKQSCLKFKANDHGYDNFRSSNKYSSS. S-palmitoyl cysteine attachment occurs at residues Cys402, Cys403, and Cys405. Residue Ser419 is modified to Phosphoserine. Position 439 is a phosphotyrosine (Tyr439). 3 positions are modified to phosphoserine: Ser440, Ser441, and Ser442.

This sequence belongs to the G-protein coupled receptor 1 family. Endothelin receptor subfamily. EDNRB sub-subfamily. In terms of processing, palmitoylation of Cys-402 was confirmed by the palmitoylation of Cys-402 in a deletion mutant lacking both Cys-403 and Cys-405. In terms of tissue distribution, expressed in placental stem villi vessels, but not in cultured placental villi smooth muscle cells.

It localises to the cell membrane. In terms of biological role, non-specific receptor for endothelin 1, 2, and 3. Mediates its action by association with G proteins that activate a phosphatidylinositol-calcium second messenger system. This Homo sapiens (Human) protein is Endothelin receptor type B.